A 194-amino-acid chain; its full sequence is MAAMSEEGSCVNFKEMMFIDNTLYLIPEDNGDLESDHFGRLHCTTAVIRSINDQVLFVDKRNPPVFEDMPDIDRTANESQTRLIIYMYKDSEVRGLAVTLSVKDGRMSTLSCKNKIISFEEMNPPENIDDIKSDLIFFQKRVPGHNKMEFESSLYEGHFLACQKEDDAFKLVLKRKDENGDKSVMFTLTNLHQS.

Residues 1–36 (MAAMSEEGSCVNFKEMMFIDNTLYLIPEDNGDLESD) constitute a propeptide that is removed on maturation.

It belongs to the IL-1 family. In terms of assembly, forms a ternary complex with ligand-binding receptor subunit IL18R1 and signaling receptor subunit IL18RAP at the plasma membrane. Mature IL18 first binds to IL18R1 forming a low affinity binary complex, which then interacts with IL18RAP to form a high affinity ternary complex that signals inside the cell. Interacts with cargo receptor TMED10; the interaction mediates the translocation from the cytoplasm into the ERGIC (endoplasmic reticulum-Golgi intermediate compartment) and thereby secretion. In terms of processing, the pro-IL-18 precursor is processed by CASP1 to yield its mature, active form. The pro-IL-18 precursor is however not processed by Casp4/Casp11 in rodents. The pro-IL-18 precursor features autoinhibitory interactions between the propeptide and the post-cleavage-site region, preventing recognition by the IL18R1 receptor. Processing by CASP1 induces conformational changes to generate critical receptor-binding sites. The mature form is then secreted and released in the extracellular milieu by passing through the gasdermin-D (GSDMD) pore. In contrast, cleavage by CASP3 inactivates IL18.

The protein localises to the cytoplasm. Its subcellular location is the cytosol. It localises to the secreted. Functionally, pro-inflammatory cytokine primarily involved in epithelial barrier repair, polarized T-helper 1 (Th1) cell and natural killer (NK) cell immune responses. Upon binding to IL18R1 and IL18RAP, forms a signaling ternary complex which activates NF-kappa-B, triggering synthesis of inflammatory mediators. Synergizes with IL12/interleukin-12 to induce IFNG synthesis from T-helper 1 (Th1) cells and natural killer (NK) cells. Involved in transduction of inflammation downstream of pyroptosis: its mature form is specifically released in the extracellular milieu by passing through the gasdermin-D (GSDMD) pore. This is Interleukin-18 (Il18) from Rattus norvegicus (Rat).